The sequence spans 301 residues: Probable deoxyhypusine synthase 1 (301 aa).

Lysine 269 acts as the Nucleophile in catalysis.

It belongs to the deoxyhypusine synthase family. The cofactor is NAD(+).

It carries out the reaction [eIF5A protein]-L-lysine + spermidine = [eIF5A protein]-deoxyhypusine + propane-1,3-diamine. Its pathway is protein modification; eIF5A hypusination. Functionally, catalyzes the NAD-dependent oxidative cleavage of spermidine and the subsequent transfer of the butylamine moiety of spermidine to the epsilon-amino group of a specific lysine residue of the eIF-5A precursor protein to form the intermediate deoxyhypusine residue. This Archaeoglobus fulgidus (strain ATCC 49558 / DSM 4304 / JCM 9628 / NBRC 100126 / VC-16) protein is Probable deoxyhypusine synthase 1 (dys1).